The sequence spans 922 residues: Protein translocase subunit SecA (922 aa).

ATP-binding positions include Gln-87, 105 to 109, and Asp-516; that span reads GEGKT. The segment at 867–912 is disordered; sequence YTAPTETGEPETLPDPRTAGAGGDGLNLPEGVRIGRNDPCPCGSGK. The Zn(2+) site is built by Cys-906, Cys-908, Cys-917, and His-918.

Belongs to the SecA family. In terms of assembly, monomer and homodimer. Part of the essential Sec protein translocation apparatus which comprises SecA, SecYEG and auxiliary proteins SecDF-YajC and YidC. It depends on Zn(2+) as a cofactor.

The protein resides in the cell inner membrane. It localises to the cytoplasm. The enzyme catalyses ATP + H2O + cellular proteinSide 1 = ADP + phosphate + cellular proteinSide 2.. In terms of biological role, part of the Sec protein translocase complex. Interacts with the SecYEG preprotein conducting channel. Has a central role in coupling the hydrolysis of ATP to the transfer of proteins into and across the cell membrane, serving both as a receptor for the preprotein-SecB complex and as an ATP-driven molecular motor driving the stepwise translocation of polypeptide chains across the membrane. The protein is Protein translocase subunit SecA of Paracidovorax citrulli (strain AAC00-1) (Acidovorax citrulli).